A 55-amino-acid chain; its full sequence is UPF0391 membrane protein NE1120 (55 aa).

2 helical membrane-spanning segments follow: residues 4–24 and 27–47; these read MALV…AGIA and LAWA…VFYL.

Belongs to the UPF0391 family.

It localises to the cell membrane. In Nitrosomonas europaea (strain ATCC 19718 / CIP 103999 / KCTC 2705 / NBRC 14298), this protein is UPF0391 membrane protein NE1120.